Consider the following 204-residue polypeptide: uncharacterized protein (204 aa).

This is an uncharacterized protein from Acinetobacter calcoaceticus.